The following is a 274-amino-acid chain: NADPH-dependent 7-cyano-7-deazaguanine reductase (274 aa).

Residue 80–82 (VES) coordinates substrate. Position 82 to 83 (82 to 83 (SK)) interacts with NADPH. C181 functions as the Thioimide intermediate in the catalytic mechanism. D188 serves as the catalytic Proton donor. Residue 220-221 (HE) coordinates substrate. 249–250 (RG) contributes to the NADPH binding site.

It belongs to the GTP cyclohydrolase I family. QueF type 2 subfamily. Homodimer.

It localises to the cytoplasm. The enzyme catalyses 7-aminomethyl-7-carbaguanine + 2 NADP(+) = 7-cyano-7-deazaguanine + 2 NADPH + 3 H(+). The protein operates within tRNA modification; tRNA-queuosine biosynthesis. Catalyzes the NADPH-dependent reduction of 7-cyano-7-deazaguanine (preQ0) to 7-aminomethyl-7-deazaguanine (preQ1). The polypeptide is NADPH-dependent 7-cyano-7-deazaguanine reductase (Burkholderia thailandensis (strain ATCC 700388 / DSM 13276 / CCUG 48851 / CIP 106301 / E264)).